Here is a 383-residue protein sequence, read N- to C-terminus: Anhydro-N-acetylmuramic acid kinase (383 aa).

9-16 (GTSVDSID) is a binding site for ATP.

The protein belongs to the anhydro-N-acetylmuramic acid kinase family.

It carries out the reaction 1,6-anhydro-N-acetyl-beta-muramate + ATP + H2O = N-acetyl-D-muramate 6-phosphate + ADP + H(+). Its pathway is amino-sugar metabolism; 1,6-anhydro-N-acetylmuramate degradation. It functions in the pathway cell wall biogenesis; peptidoglycan recycling. In terms of biological role, catalyzes the specific phosphorylation of 1,6-anhydro-N-acetylmuramic acid (anhMurNAc) with the simultaneous cleavage of the 1,6-anhydro ring, generating MurNAc-6-P. Is required for the utilization of anhMurNAc either imported from the medium or derived from its own cell wall murein, and thus plays a role in cell wall recycling. The chain is Anhydro-N-acetylmuramic acid kinase from Crocosphaera subtropica (strain ATCC 51142 / BH68) (Cyanothece sp. (strain ATCC 51142)).